Here is a 291-residue protein sequence, read N- to C-terminus: Light-independent protochlorophyllide reductase iron-sulfur ATP-binding protein (291 aa).

ATP is bound by residues 10 to 15 (GIGKST) and K39. S14 is a binding site for Mg(2+). Positions 95 and 129 each coordinate [4Fe-4S] cluster. 180–181 (NR) is an ATP binding site.

This sequence belongs to the NifH/BchL/ChlL family. Homodimer. Protochlorophyllide reductase is composed of three subunits; ChlL, ChlN and ChlB. Requires [4Fe-4S] cluster as cofactor.

It localises to the plastid. It is found in the chloroplast. It carries out the reaction chlorophyllide a + oxidized 2[4Fe-4S]-[ferredoxin] + 2 ADP + 2 phosphate = protochlorophyllide a + reduced 2[4Fe-4S]-[ferredoxin] + 2 ATP + 2 H2O. The protein operates within porphyrin-containing compound metabolism; chlorophyll biosynthesis (light-independent). Functionally, component of the dark-operative protochlorophyllide reductase (DPOR) that uses Mg-ATP and reduced ferredoxin to reduce ring D of protochlorophyllide (Pchlide) to form chlorophyllide a (Chlide). This reaction is light-independent. The L component serves as a unique electron donor to the NB-component of the complex, and binds Mg-ATP. In Pinus contorta (Shore pine), this protein is Light-independent protochlorophyllide reductase iron-sulfur ATP-binding protein.